Consider the following 1011-residue polypeptide: Phosphoenolpyruvate carboxylase (1011 aa).

Active-site residues include histidine 207 and lysine 658.

The protein belongs to the PEPCase type 1 family. The cofactor is Mg(2+).

It carries out the reaction oxaloacetate + phosphate = phosphoenolpyruvate + hydrogencarbonate. Functionally, forms oxaloacetate, a four-carbon dicarboxylic acid source for the tricarboxylic acid cycle. This Thermosynechococcus vestitus (strain NIES-2133 / IAM M-273 / BP-1) protein is Phosphoenolpyruvate carboxylase (ppc).